We begin with the raw amino-acid sequence, 262 residues long: Small ribosomal subunit protein uS2 (262 aa).

The protein belongs to the universal ribosomal protein uS2 family.

The polypeptide is Small ribosomal subunit protein uS2 (Borreliella burgdorferi (strain ZS7) (Borrelia burgdorferi)).